Consider the following 313-residue polypeptide: MKKKLLAGAITLLSVATLAACSKGSEGADLISMKGDVITEHQFYEQVKNNPSAQQVLLNMTIQKVFEKQYGSELDDKEVDDTIAEEKKQYGENYQRVLSQAGMTLETRKAQIRTSKLVELAVKKVAEAELTDEAYKKAFDEYTPDVTAQIIRLNNEDKAKEVLEKAKAEGADFAQLAKDNSTDEKTKENGGEITFDSASTEVPEQVKKAAFALDVDGVSDVITATGTQAYSSQYYIVKLTKKTEKSSNIDDYKEKLKTVILTQKQNDSTFVQSIIGKELQAANIKVKDQAFQNIFTQYIGGGDSSSSSSTSNE.

The N-terminal stretch at 1–20 is a signal peptide; sequence MKKKLLAGAITLLSVATLAA. C21 is lipidated: N-palmitoyl cysteine. C21 is lipidated: S-diacylglycerol cysteine. Residues 143–241 enclose the PpiC domain; the sequence is TPDVTAQIIR…SQYYIVKLTK (99 aa).

This sequence belongs to the PrsA family.

It is found in the cell membrane. The catalysed reaction is [protein]-peptidylproline (omega=180) = [protein]-peptidylproline (omega=0). Plays a major role in protein secretion by helping the post-translocational extracellular folding of several secreted proteins. The chain is Foldase protein PrsA from Streptococcus pneumoniae (strain ATCC BAA-255 / R6).